A 95-amino-acid chain; its full sequence is Basic phospholipase A2 (95 aa).

Residues K7 and K10 are each lipidated (N6-palmitoyl lysine). Residues Y23, G25, and G27 each coordinate Ca(2+). 5 disulfides stabilise this stretch: C24–C40, C39–C77, C46–C70, C53–C63, and C57–C68. H43 is a catalytic residue. D44 contacts Ca(2+). The active site involves D71.

Monomer. Ca(2+) is required as a cofactor. Expressed by the venom gland.

It localises to the secreted. It catalyses the reaction a 1,2-diacyl-sn-glycero-3-phosphocholine + H2O = a 1-acyl-sn-glycero-3-phosphocholine + a fatty acid + H(+). Its function is as follows. PLA2 catalyzes the calcium-dependent hydrolysis of the 2-acyl groups in 3-sn-phosphoglycerides. Induces local and systemic myotoxicity in an intramuscular mouse model. Induces local edema in a mouse footpad assay. Does not exhibit any anticoagulant effects. Does not mediate an antibacterial effect against Gram-negative and Gram-positive bacteria. In Agkistrodon piscivorus leucostoma (Western cottonmouth), this protein is Basic phospholipase A2.